The following is a 780-amino-acid chain: Aconitate hydratase, mitochondrial (780 aa).

A mitochondrion-targeting transit peptide spans 1–27; that stretch reads MAPYSLLVSRLQKALGARQYHVASVLC. Residue K31 is modified to N6-succinyllysine. Residue K50 is modified to N6-acetyllysine; alternate. K50 is modified (N6-succinyllysine; alternate). Q99 contacts substrate. N6-acetyllysine; alternate is present on residues K138 and K144. K138 and K144 each carry N6-succinyllysine; alternate. 192–194 is a binding site for substrate; the sequence is DSH. K233 carries the N6-acetyllysine; alternate modification. K233 is subject to N6-succinyllysine; alternate. C385 is a binding site for [4Fe-4S] cluster. K411 carries the N6-succinyllysine modification. Positions 448 and 451 each coordinate [4Fe-4S] cluster. R474 and R479 together coordinate substrate. Residues K517 and K523 each carry the N6-acetyllysine; alternate modification. Residues K517 and K523 each carry the N6-succinyllysine; alternate modification. Residues 524-537 are compositionally biased toward basic and acidic residues; that stretch reads LEAPDADELPRAEF. The tract at residues 524–560 is disordered; it reads LEAPDADELPRAEFDPGQDTYQHPPKDSSGQQVDVSP. K549 carries the post-translational modification N6-succinyllysine. The segment covering 551–560 has biased composition (polar residues); sequence SSGQQVDVSP. S559 carries the phosphoserine modification. N6-acetyllysine; alternate is present on K573. The residue at position 573 (K573) is an N6-succinyllysine; alternate. At K591 the chain carries N6-succinyllysine. Position 605 is an N6-acetyllysine; alternate (K605). N6-succinyllysine; alternate is present on K605. R607 provides a ligand contact to substrate. Position 628 is an N6-succinyllysine (K628). Phosphoserine is present on S670. 670–671 contacts substrate; the sequence is SR. N6-succinyllysine is present on K689. N6-acetyllysine; alternate is present on residues K723 and K730. K723 and K730 each carry N6-succinyllysine; alternate. Residues K736 and K743 each carry the N6-acetyllysine modification.

This sequence belongs to the aconitase/IPM isomerase family. As to quaternary structure, monomer. The cofactor is [4Fe-4S] cluster. Post-translationally, forms covalent cross-links mediated by transglutaminase TGM2, between a glutamine and the epsilon-amino group of a lysine residue, forming homopolymers and heteropolymers.

The protein localises to the mitochondrion. It carries out the reaction citrate = D-threo-isocitrate. It participates in carbohydrate metabolism; tricarboxylic acid cycle; isocitrate from oxaloacetate: step 2/2. Its function is as follows. Catalyzes the isomerization of citrate to isocitrate via cis-aconitate. This Bos taurus (Bovine) protein is Aconitate hydratase, mitochondrial (ACO2).